Here is an 802-residue protein sequence, read N- to C-terminus: Phenylalanine--tRNA ligase beta subunit (802 aa).

The tRNA-binding domain maps to 40-155 (SASLKNVVVG…AHVETGVNAI (116 aa)). The B5 domain maps to 409 to 484 (KAVNKIETSL…RIYGYDEIPV (76 aa)). Residues D462, D468, E471, and E472 each contribute to the Mg(2+) site. An FDX-ACB domain is found at 709-802 (PRYPEMTRDL…LQEKLNAIIR (94 aa)).

Belongs to the phenylalanyl-tRNA synthetase beta subunit family. Type 1 subfamily. Tetramer of two alpha and two beta subunits. The cofactor is Mg(2+).

Its subcellular location is the cytoplasm. The catalysed reaction is tRNA(Phe) + L-phenylalanine + ATP = L-phenylalanyl-tRNA(Phe) + AMP + diphosphate + H(+). The sequence is that of Phenylalanine--tRNA ligase beta subunit from Listeria monocytogenes serovar 1/2a (strain ATCC BAA-679 / EGD-e).